The sequence spans 332 residues: Ferredoxin--NADP reductase (332 aa).

Thr20, Glu39, Gln47, Tyr52, Val92, Phe126, Asp288, and Ser329 together coordinate FAD.

It belongs to the ferredoxin--NADP reductase type 2 family. As to quaternary structure, homodimer. It depends on FAD as a cofactor.

The catalysed reaction is 2 reduced [2Fe-2S]-[ferredoxin] + NADP(+) + H(+) = 2 oxidized [2Fe-2S]-[ferredoxin] + NADPH. The sequence is that of Ferredoxin--NADP reductase from Geobacillus thermodenitrificans (strain NG80-2).